The following is a 345-amino-acid chain: Probable S-adenosylmethionine carrier 2, chloroplastic (345 aa).

The transit peptide at 1-31 (MTKALSGFCCSLSLSTLVRSSSSHMDSDIVS) directs the protein to the chloroplast. Solcar repeat units follow at residues 76-148 (RVLY…TKQK), 157-239 (LSAV…LRIG), and 252-334 (ENAM…TKQI). 5 helical membrane passes run 82 to 102 (LITG…IDTI), 121 to 141 (YSGL…FFGV), 156 to 176 (NLSA…SSIV), 254 to 274 (AMIG…LDVI), and 309 to 329 (GMGP…GVLE).

This sequence belongs to the mitochondrial carrier (TC 2.A.29) family. As to expression, expressed at low levels in seedlings, leaves, flowers, stems and roots.

The protein localises to the plastid. The protein resides in the chloroplast membrane. Probable S-adenosylmethionine (SAM) transporter able to catalyze both uniport and exchange reactions through membranes. This chain is Probable S-adenosylmethionine carrier 2, chloroplastic (SAMC2), found in Arabidopsis thaliana (Mouse-ear cress).